Consider the following 128-residue polypeptide: Calcitonin gene-related peptide 1 (128 aa).

A signal peptide spans 1–25; the sequence is MGFQKFSPFLALSILVLLQAGSLHA. The propeptide occupies 26–80; sequence APFRSALESSPADPATLSEDEARLLLAALVQDYVQMKASELEQEQEREGSRIIAQ. A disulfide bridge links cysteine 84 with cysteine 89. Phenylalanine 119 carries the phenylalanine amide modification. Residues 125–128 constitute a propeptide that is removed on maturation; sequence DLQA.

The protein belongs to the calcitonin family. As to expression, expressed in spinal cord.

The protein localises to the secreted. In terms of biological role, CGRP1/CALCA is a peptide hormone that induces vasodilation mediated by the CALCRL-RAMP1 receptor complex. Dilates a variety of vessels including the coronary, cerebral and systemic vasculature. Its abundance in the CNS also points toward a neurotransmitter or neuromodulator role. It also elevates platelet cAMP. CGRP1 can also bind and activate CALCR-RAMP1 (AMYR1) receptor complex. In Homo sapiens (Human), this protein is Calcitonin gene-related peptide 1.